Consider the following 857-residue polypeptide: Thiamine repressible genes regulatory protein thi5 (857 aa).

Positions 38 to 64 (CLSCRAKKIRCSGSEPCQACIATPSQC) form a DNA-binding region, zn(2)-C6 fungal-type. Disordered stretches follow at residues 152–175 (AVKS…NFSS) and 797–819 (GHAL…HPSQ). Over residues 159–175 (SFPSSSTPPSSDSNFSS) the composition is skewed to low complexity. The segment covering 803-819 (PESNNSSNSFKPSHPSQ) has biased composition (polar residues).

It localises to the nucleus. In terms of biological role, transcription factor that activates the nmt1 promoter. Regulation of thiamine repressible genes. Negatively regulates conjugation during meiosis, by inducing negative regulators which delay conjugation. Involved in thi1 regulation. The protein is Thiamine repressible genes regulatory protein thi5 (thi5) of Schizosaccharomyces pombe (strain 972 / ATCC 24843) (Fission yeast).